The following is a 282-amino-acid chain: uncharacterized protein (282 aa).

Y50 functions as the Proton donor in the catalytic mechanism. H115 lines the substrate pocket.

It belongs to the aldo/keto reductase family.

This is an uncharacterized protein from Saccharomyces cerevisiae (strain ATCC 204508 / S288c) (Baker's yeast).